The following is a 285-amino-acid chain: Iron uptake system component EfeM (285 aa).

The signal sequence occupies residues 1-34 (MTYPLLTRKTLMKKTPLALLLTLGLLQTPLAAFA).

Belongs to the EfeM/EfeO family. Component of the iron transporter efeUOB/M complex composed of EfeU, EfeM and EfeB.

The protein resides in the periplasm. Functionally, part of the iron transporter system efeUOB/M involved in iron import. Specifically binds Fe(3+), which is produced by EfeB-mediated oxidation of Fe(2+), and delivers it to the cell inner membrane permease EfeU. Also binds Zn(2+) and Cu(2+) in vitro. This chain is Iron uptake system component EfeM, found in Pseudomonas syringae pv. syringae (strain B728a).